The sequence spans 209 residues: Ubiquinone biosynthesis protein COQ4 homolog 2, mitochondrial (209 aa).

Zn(2+) contacts are provided by His-118, Asp-119, His-122, and Glu-134.

Belongs to the COQ4 family. In terms of assembly, component of a multi-subunit COQ enzyme complex. The cofactor is Zn(2+).

The protein resides in the mitochondrion inner membrane. The catalysed reaction is a 4-hydroxy-3-methoxy-5-(all-trans-polyprenyl)benzoate + H(+) = a 2-methoxy-6-(all-trans-polyprenyl)phenol + CO2. It functions in the pathway cofactor biosynthesis; ubiquinone biosynthesis. Lyase that catalyzes the C1-decarboxylation of 4-hydroxy-3-methoxy-5-(all-trans-polyprenyl)benzoic acid into 2-methoxy-6-(all-trans-polyprenyl)phenol during ubiquinone biosynthesis. The sequence is that of Ubiquinone biosynthesis protein COQ4 homolog 2, mitochondrial from Paramecium tetraurelia.